Here is a 398-residue protein sequence, read N- to C-terminus: Succinate--CoA ligase [ADP-forming] subunit beta (398 aa).

An ATP-grasp domain is found at 9-254 (KAVLREFGVS…ETEEDAKEIE (246 aa)). Residues lysine 46, 53–55 (GRG), glutamate 109, alanine 112, and glutamate 117 each bind ATP. Residues asparagine 209 and aspartate 223 each coordinate Mg(2+). Substrate is bound by residues asparagine 274 and 331–333 (GIM).

The protein belongs to the succinate/malate CoA ligase beta subunit family. Heterotetramer of two alpha and two beta subunits. The cofactor is Mg(2+).

It catalyses the reaction succinate + ATP + CoA = succinyl-CoA + ADP + phosphate. The catalysed reaction is GTP + succinate + CoA = succinyl-CoA + GDP + phosphate. The protein operates within carbohydrate metabolism; tricarboxylic acid cycle; succinate from succinyl-CoA (ligase route): step 1/1. In terms of biological role, succinyl-CoA synthetase functions in the citric acid cycle (TCA), coupling the hydrolysis of succinyl-CoA to the synthesis of either ATP or GTP and thus represents the only step of substrate-level phosphorylation in the TCA. The beta subunit provides nucleotide specificity of the enzyme and binds the substrate succinate, while the binding sites for coenzyme A and phosphate are found in the alpha subunit. The protein is Succinate--CoA ligase [ADP-forming] subunit beta of Afipia carboxidovorans (strain ATCC 49405 / DSM 1227 / KCTC 32145 / OM5) (Oligotropha carboxidovorans).